Consider the following 141-residue polypeptide: Galactose-6-phosphate isomerase subunit LacA (141 aa).

It belongs to the LacAB/RpiB family. In terms of assembly, heteromultimeric protein consisting of LacA and LacB.

The catalysed reaction is aldehydo-D-galactose 6-phosphate = keto-D-tagatose 6-phosphate. It participates in carbohydrate metabolism; D-galactose 6-phosphate degradation; D-tagatose 6-phosphate from D-galactose 6-phosphate: step 1/1. The polypeptide is Galactose-6-phosphate isomerase subunit LacA (Streptococcus equi subsp. zooepidemicus (strain MGCS10565)).